A 695-amino-acid polypeptide reads, in one-letter code: Elongation factor G 1 (695 aa).

The 277-residue stretch at 6-282 (STFRNIGISA…AITYYLPDPT (277 aa)) folds into the tr-type G domain. Residues 15-22 (AHIDSGKT), 82-86 (DTPGH), and 136-139 (NKCD) contribute to the GTP site.

The protein belongs to the TRAFAC class translation factor GTPase superfamily. Classic translation factor GTPase family. EF-G/EF-2 subfamily.

Its subcellular location is the cytoplasm. Its function is as follows. Catalyzes the GTP-dependent ribosomal translocation step during translation elongation. During this step, the ribosome changes from the pre-translocational (PRE) to the post-translocational (POST) state as the newly formed A-site-bound peptidyl-tRNA and P-site-bound deacylated tRNA move to the P and E sites, respectively. Catalyzes the coordinated movement of the two tRNA molecules, the mRNA and conformational changes in the ribosome. In Treponema pallidum (strain Nichols), this protein is Elongation factor G 1 (fusA).